Reading from the N-terminus, the 251-residue chain is 5'-nucleotidase SurE (251 aa).

A divalent metal cation contacts are provided by Asp-8, Asp-9, Ser-39, and Asn-91.

It belongs to the SurE nucleotidase family. Requires a divalent metal cation as cofactor.

The protein localises to the cytoplasm. The catalysed reaction is a ribonucleoside 5'-phosphate + H2O = a ribonucleoside + phosphate. In terms of biological role, nucleotidase that shows phosphatase activity on nucleoside 5'-monophosphates. This is 5'-nucleotidase SurE from Thioalkalivibrio sulfidiphilus (strain HL-EbGR7).